The primary structure comprises 571 residues: FAD-binding monooxygenase VdtE (571 aa).

FAD is bound by residues 44–47 (VWYW), 56–57 (DS), and Tyr62. 54–56 (RVD) provides a ligand contact to NADP(+). NADP(+)-binding positions include 187 to 193 (TGASAVQ) and 210 to 211 (RT).

This sequence belongs to the FAD-binding monooxygenase family. FAD is required as a cofactor.

It carries out the reaction 9,10-dihydroxy-7-methoxy-3-(2-oxopropyl)-1H-benzo[g]isochromen-1-one + NADPH + O2 + H(+) = methyl 2-[(3S)-9,10-dihydroxy-7-methoxy-1-oxo-1H,3H,4H-naphtho[2,3-c]pyran-3-yl]acetate + NADP(+) + H2O. The catalysed reaction is (3S)-9,10-dihydroxy-7-methoxy-3-(2-oxopropyl)-1H,3H,4H-naphtho[2,3-c]pyran-1-one + NADPH + O2 + H(+) = semiviriditoxin + NADP(+) + H2O. It functions in the pathway secondary metabolite biosynthesis. FAD-binding monooxygenase; part of the gene cluster that mediates the biosynthesis of viriditoxin, one of the 'classical' secondary metabolites produced by fungi and that has antibacterial activity. The first step is performed by the polyketide synthase VdtA which condenses one acetyl-CoA and 6 malonyl-CoA units to form the heptaketide monomer backbone of viriditoxin. The product of VdtA is then O-methylated on C7 by the O-methyltransferase VdtC. The O-methyl group is important for the stereoselective coupling of the monomers at the final step of viriditoxin biosynthesis. The short-chain dehydrogenase/reductase VdtF then acts as a stereospecific reductase converting the pyrone to dihydropyrone via the reduction of the C3-C4 double bond. The FAD-binding monooxygenase VdtE then converts the ketone group into a methyl-ester group to yield semi-viriditoxin. Finally, the laccase VdtB is involved in dimerization of 2 semi-viriditoxin molecules to yield the final viriditoxin. VdtB is responsible for the regioselective 6,6'-coupling of semi-viriditoxin, which yields (M)-viriditoxin and (P)-viriditoxin at a ratio of 1:2. The non-catalytic carboxylesterase-like protein VdtD affects the stereochemistical outcome of the coupling. The highly reducing polyketide synthase VdtX is not involved in viriditoxin synthesis, but might possibly play a role in the production of additional metabolites not identified yet. The polypeptide is FAD-binding monooxygenase VdtE (Byssochlamys spectabilis (Paecilomyces variotii)).